The primary structure comprises 429 residues: Glutamate-1-semialdehyde 2,1-aminomutase 2 (429 aa).

The residue at position 268 (lysine 268) is an N6-(pyridoxal phosphate)lysine.

This sequence belongs to the class-III pyridoxal-phosphate-dependent aminotransferase family. HemL subfamily. As to quaternary structure, homodimer. It depends on pyridoxal 5'-phosphate as a cofactor.

The protein resides in the cytoplasm. It carries out the reaction (S)-4-amino-5-oxopentanoate = 5-aminolevulinate. The protein operates within porphyrin-containing compound metabolism; protoporphyrin-IX biosynthesis; 5-aminolevulinate from L-glutamyl-tRNA(Glu): step 2/2. This is Glutamate-1-semialdehyde 2,1-aminomutase 2 from Bacillus cereus (strain B4264).